Here is a 186-residue protein sequence, read N- to C-terminus: Casparian strip membrane protein 1 (186 aa).

At 1–26 (MKSSPAELISEAKSSTQNSKMKRAVS) the chain is on the cytoplasmic side. A helical membrane pass occupies residues 27-47 (VLDFILRLIAVVATLASAIAM). Topologically, residues 48–74 (GTTDESLPFFTQFIRFRAEYDDLPTLR) are extracellular. Residues 75-95 (LFVVASAFASGYLILSLPLSI) form a helical membrane-spanning segment. At 96-107 (LHITRSSARRTR) the chain is on the cytoplasmic side. Residues 108–128 (VILIILDMVMLTSLTAASSAA) traverse the membrane as a helical segment. The Extracellular portion of the chain corresponds to 129 to 161 (AAIVYLAHKGNAKANWFAFCQQYDSFCERISGS). The helical transmembrane segment at 162-182 (LIGSFIAIPLFIMLILFSALV) threads the bilayer. Topologically, residues 183–186 (LSKR) are cytoplasmic.

This sequence belongs to the Casparian strip membrane proteins (CASP) family. In terms of assembly, homodimer and heterodimers.

Its subcellular location is the cell membrane. In terms of biological role, regulates membrane-cell wall junctions and localized cell wall deposition. Required for establishment of the Casparian strip membrane domain (CSD) and the subsequent formation of Casparian strips, a cell wall modification of the root endodermis that determines an apoplastic barrier between the intraorganismal apoplasm and the extraorganismal apoplasm and prevents lateral diffusion. The protein is Casparian strip membrane protein 1 of Lotus japonicus (Lotus corniculatus var. japonicus).